The chain runs to 448 residues: Protein odr-4 homolog (448 aa).

2 consecutive transmembrane segments (helical) span residues 76–96 (ASQLGRMLPGGLMVLGVFLMT) and 428–448 (GLLISTVVASIAVIISFYYII).

It belongs to the ODR-4 family.

It localises to the membrane. May play a role in the trafficking of a subset of G-protein coupled receptors. This chain is Protein odr-4 homolog (odr4), found in Xenopus tropicalis (Western clawed frog).